The primary structure comprises 496 residues: Lysine--tRNA ligase (496 aa).

Mg(2+) contacts are provided by E409 and E416.

Belongs to the class-II aminoacyl-tRNA synthetase family. Homodimer. It depends on Mg(2+) as a cofactor.

The protein resides in the cytoplasm. The catalysed reaction is tRNA(Lys) + L-lysine + ATP = L-lysyl-tRNA(Lys) + AMP + diphosphate. In Streptococcus agalactiae serotype III (strain NEM316), this protein is Lysine--tRNA ligase.